The following is a 455-amino-acid chain: 2-oxoisovalerate dehydrogenase subunit alpha, mitochondrial (455 aa).

The transit peptide at 1–55 (MQGSAKMAMAVAVAVARVWRPSRGLGRTGLPLLRLLGARGLARFHPHRWQQQQHF) directs the protein to the mitochondrion. Thiamine diphosphate-binding residues include Y168 and R169. S216 is a K(+) binding site. Position 217 (S217) interacts with thiamine diphosphate. Residues P218, T221, and Q222 each coordinate K(+). E248 serves as a coordination point for Mg(2+). Thiamine diphosphate-binding residues include G249, A250, and R275. N277 and Y279 together coordinate Mg(2+). H346 contacts thiamine diphosphate. Phosphoserine; by BCKDK is present on S347. At T348 the chain carries Phosphothreonine. A phosphoserine mark is found at S349 and S357. At K366 the chain carries N6-acetyllysine; alternate. The residue at position 366 (K366) is an N6-succinyllysine; alternate. K390 bears the N6-succinyllysine mark.

This sequence belongs to the BCKDHA family. In terms of assembly, heterotetramer of 2 alpha/BCKDHA and 2 beta chains/BCKDHB that forms the branched-chain alpha-keto acid decarboxylase (E1) component of the BCKD complex. The branched-chain alpha-ketoacid dehydrogenase is a large complex composed of three major building blocks E1, E2 and E3. It is organized around E2, a 24-meric cubic core composed of DBT, to which are associated 6 to 12 copies of E1, and approximately 6 copies of the dehydrogenase E3, a DLD dimer. Interacts with PPM1K. The cofactor is thiamine diphosphate. Mg(2+) is required as a cofactor. Post-translationally, phosphorylated at Ser-347 by BCKDK and dephosphorylated by protein phosphatase PPM1K. Expressed in kidney (at protein level).

Its subcellular location is the mitochondrion matrix. It carries out the reaction N(6)-[(R)-lipoyl]-L-lysyl-[protein] + 3-methyl-2-oxobutanoate + H(+) = N(6)-[(R)-S(8)-2-methylpropanoyldihydrolipoyl]-L-lysyl-[protein] + CO2. Together with BCKDHB forms the heterotetrameric E1 subunit of the mitochondrial branched-chain alpha-ketoacid dehydrogenase (BCKD) complex. The BCKD complex catalyzes the multi-step oxidative decarboxylation of alpha-ketoacids derived from the branched-chain amino-acids valine, leucine and isoleucine producing CO2 and acyl-CoA which is subsequently utilized to produce energy. The E1 subunit catalyzes the first step with the decarboxylation of the alpha-ketoacid forming an enzyme-product intermediate. A reductive acylation mediated by the lipoylamide cofactor of E2 extracts the acyl group from the E1 active site for the next step of the reaction. In Bos taurus (Bovine), this protein is 2-oxoisovalerate dehydrogenase subunit alpha, mitochondrial (BCKDHA).